Consider the following 395-residue polypeptide: Elongation factor Tu (395 aa).

Residues 10 to 204 (KPHVNIGTIG…IVDEYIPTPE (195 aa)) enclose the tr-type G domain. The interval 19 to 26 (GHVDHGKT) is G1. 19 to 26 (GHVDHGKT) contributes to the GTP binding site. Residue Thr26 coordinates Mg(2+). The tract at residues 60–64 (GITIN) is G2. The interval 81–84 (DAPG) is G3. Residues 81–85 (DAPGH) and 136–139 (NKAD) each bind GTP. The interval 136–139 (NKAD) is G4. The tract at residues 174 to 176 (SAL) is G5.

The protein belongs to the TRAFAC class translation factor GTPase superfamily. Classic translation factor GTPase family. EF-Tu/EF-1A subfamily. As to quaternary structure, monomer.

The protein resides in the cytoplasm. The catalysed reaction is GTP + H2O = GDP + phosphate + H(+). GTP hydrolase that promotes the GTP-dependent binding of aminoacyl-tRNA to the A-site of ribosomes during protein biosynthesis. The chain is Elongation factor Tu from Lactococcus lactis subsp. lactis (strain IL1403) (Streptococcus lactis).